Consider the following 261-residue polypeptide: Prostatic glandular kallikrein-6 (261 aa).

Residues 1-18 (MWLLILFLILSLGWNDAA) form the signal peptide. Positions 19–24 (PPGQSR) are cleaved as a propeptide — activation peptide. The Peptidase S1 domain occupies 25-258 (IIGGFNCEKN…FTSWMKKVMK (234 aa)). Intrachain disulfides connect cysteine 31–cysteine 173, cysteine 50–cysteine 66, cysteine 152–cysteine 219, cysteine 184–cysteine 198, and cysteine 209–cysteine 234. Histidine 65 functions as the Charge relay system in the catalytic mechanism. Asparagine 108 carries an N-linked (GlcNAc...) asparagine glycan. Aspartate 120 functions as the Charge relay system in the catalytic mechanism. Serine 213 functions as the Charge relay system in the catalytic mechanism.

The protein belongs to the peptidase S1 family. Kallikrein subfamily.

The catalysed reaction is Preferential cleavage of Arg-|-Xaa bonds in small molecule substrates. Highly selective action to release kallidin (lysyl-bradykinin) from kininogen involves hydrolysis of Met-|-Xaa or Leu-|-Xaa.. Glandular kallikreins cleave Met-Lys and Arg-Ser bonds in kininogen to release Lys-bradykinin. This is Prostatic glandular kallikrein-6 (Klk6) from Rattus norvegicus (Rat).